A 209-amino-acid polypeptide reads, in one-letter code: uncharacterized protein (209 aa).

An N-terminal signal peptide occupies residues 1–17 (MKRLVTGLLALSLFLAA). A disordered region spans residues 17–105 (ACGQDSDQQK…SNNQANNNQK (89 aa)). Cys-18 carries N-palmitoyl cysteine lipidation. Residue Cys-18 is the site of S-diacylglycerol cysteine attachment. The span at 23–70 (DQQKDSNKEKDDKAKTEQQDEKTNDSSKDKKDKKDDSKDVNKDNKDNS) shows a compositional bias: basic and acidic residues. A compositionally biased stretch (low complexity) spans 71–105 (ANDNQQQSNSNATNNDQNQTNNNQSSNNQANNNQK).

It is found in the cell membrane. This is an uncharacterized protein from Staphylococcus aureus (strain bovine RF122 / ET3-1).